An 87-amino-acid polypeptide reads, in one-letter code: Toxin CngtIII (87 aa).

The N-terminal stretch at 1–19 (MNSLLMITACLVLFGTVWA) is a signal peptide. The LCN-type CS-alpha/beta domain occupies 20–85 (KEGYLVNKST…TYPLPNKTCS (66 aa)). Disulfide bonds link Cys-31-Cys-84, Cys-35-Cys-60, Cys-44-Cys-65, and Cys-48-Cys-67.

The protein belongs to the long (4 C-C) scorpion toxin superfamily. Sodium channel inhibitor family. Beta subfamily. Expressed by the venom gland.

Its subcellular location is the secreted. Functionally, beta toxins bind voltage-independently at site-4 of sodium channels (Nav) and shift the voltage of activation toward more negative potentials thereby affecting sodium channel activation and promoting spontaneous and repetitive firing. In Centruroides noxius (Mexican scorpion), this protein is Toxin CngtIII.